Here is a 555-residue protein sequence, read N- to C-terminus: Urocanate hydratase (555 aa).

NAD(+) is bound by residues G52–G53, Q130, G176–G178, E196, R201, N242–A243, Q263–H267, Y273–L274, and Y322. C410 is a catalytic residue. G492 contributes to the NAD(+) binding site.

It belongs to the urocanase family. NAD(+) is required as a cofactor.

It localises to the cytoplasm. It catalyses the reaction 4-imidazolone-5-propanoate = trans-urocanate + H2O. It participates in amino-acid degradation; L-histidine degradation into L-glutamate; N-formimidoyl-L-glutamate from L-histidine: step 2/3. In terms of biological role, catalyzes the conversion of urocanate to 4-imidazolone-5-propionate. The polypeptide is Urocanate hydratase (Shewanella sp. (strain W3-18-1)).